The chain runs to 503 residues: EZH inhibitory protein (503 aa).

The span at 1-16 shows a compositional bias: basic and acidic residues; the sequence is MATQSDMEKEQKHQQD. Disordered stretches follow at residues 1-72, 97-462, and 483-503; these read MATQ…AAAA, HSDR…RSIS, and VPPE…PPEP. Residues 41-72 are compositionally biased toward low complexity; that stretch reads PAASVTTVSSQASPSGGAALSSSTAGSSAAAA. Basic and acidic residues predominate over residues 97–107; the sequence is HSDRQDCRSPH. Polar residues predominate over residues 184–197; sequence YPCSGASTSSQATQ. Phosphoserine is present on S259. Low complexity predominate over residues 345-366; that stretch reads LRSRSTQQRSALLSRRSLSGSA. The sufficient for interaction with EZH2 stretch occupies residues 401 to 409; it reads WHAVRMRAS. A necessary and sufficient for inhibition of PRC2/EED-EZH1 and PRC2/EED-EZH2 complex activity region spans residues 403 to 423; it reads AVRMRASSPSPPGRFFLPIPQ. A compositionally biased stretch (low complexity) spans 428–453; the sequence is SSSSSYASNSSSPSRSPGLSPSSPSP.

In terms of assembly, interacts with PRC2/EED-EZH1 complex member EZH1 and with PRC2/EED-EZH2 complex member EZH2; the interaction blocks EZH1/EZH2 methyltransferase activity. Interacts (via C-terminus) with SUZ12 which is a member of the PRC2/EED-EZH1 and PRC2/EED-EZH2 complexes. As to expression, in testis, detected in male germ cells inside the seminiferous tubules, especially in spermatogonia and round spermatids (at protein level). In the ovary, expressed in primordial follicles and oocytes but not the external follicle cells (at protein level).

Its subcellular location is the nucleus. It localises to the cytoplasm. Its function is as follows. Inhibits PRC2/EED-EZH1 and PRC2/EED-EZH2 complex function by inhibiting EZH1/EZH2 methyltransferase activity, thereby causing down-regulation of histone H3 trimethylation on 'Lys-27' (H3K27me3). Probably inhibits methyltransferase activity by limiting the stimulatory effect of cofactors such as AEBP2 and JARID2. Inhibits H3K27me3 deposition during spermatogenesis and oogenesis. In Homo sapiens (Human), this protein is EZH inhibitory protein.